Reading from the N-terminus, the 501-residue chain is L-lysine transport protein (501 aa).

Helical transmembrane passes span 25-41, 52-76, 92-113, 138-155, 174-191, 214-232, 247-269, 292-316, 340-362, 377-393, 424-440, 447-463, and 477-495; these read LIAL…IFSI, GAML…HVLA, VGLG…SVIA, FVSA…FGVV, ILPL…GFSW, GIMV…ASVY, VIGF…GVLT, WGAA…QMLC, GAAW…IFFL, LYLV…VMLA, LIVG…LFYA, LFGA…YVWT, and IGVV…IGLV.

This sequence belongs to the amino acid-polyamine-organocation (APC) superfamily. Basic amino acid/polyamine antiporter (APA) (TC 2.A.3.2) family.

It is found in the cell membrane. Its function is as follows. Permease that is involved in the transport across the membrane of lysine. This chain is L-lysine transport protein (lysI), found in Corynebacterium glutamicum (strain ATCC 13032 / DSM 20300 / JCM 1318 / BCRC 11384 / CCUG 27702 / LMG 3730 / NBRC 12168 / NCIMB 10025 / NRRL B-2784 / 534).